The primary structure comprises 1508 residues: Pleiotropic ABC efflux transporter of multiple drugs CDR1 (1508 aa).

The tract at residues 1–30 (MSEKPFVDAPPPEDGVAHQVSPHDNGSLSE) is disordered. At 1–524 (MSEKPFVDAP…NFLRMKGDPS (524 aa)) the chain is on the cytoplasmic side. The 251-residue stretch at 165 to 415 (DYWHDMRKID…FLDMGYECPQ (251 aa)) folds into the ABC transporter 1 domain. A helical membrane pass occupies residues 525-545 (IVIFSIFGQGVMGLILSSVFY). The Extracellular segment spans residues 546–559 (NLQPTTGSFYYRGA). A helical membrane pass occupies residues 560–580 (AMFFAVLFNAFASLLEIMSLF). Residues 581-608 (EARPIVEKHKKYALYRPSADALASIISE) are Cytoplasmic-facing. Residues 609–629 (LPVKLCMSTCFNFSFYFMVHF) traverse the membrane as a helical segment. Residues 630 to 633 (RRDP) lie on the Extracellular side of the membrane. A helical membrane pass occupies residues 634 to 654 (GRFFFYWLFCGLCTLCMSHMF). Over 655 to 673 (RSLGAVSTSLAAAMTPATS) the chain is Cytoplasmic. Residues 674 to 694 (VLLAMVIFTGFVIPIPSMLGW) traverse the membrane as a helical segment. Over 695–775 (CRWIQYINPV…EYVNAHKWRN (81 aa)) the chain is Extracellular. Residues 776-796 (LGIVVAYIVVFLGVYIALTEF) form a helical membrane-spanning segment. Residues 797–1203 (NKGAMQKGEI…TFQQYWRSPG (407 aa)) are Cytoplasmic-facing. A disordered region spans residues 839–860 (KISYSDAMEKDSGESSTSDDKL). Residues 845–860 (AMEKDSGESSTSDDKL) show a composition bias toward basic and acidic residues. The 244-residue stretch at 867 to 1110 (FHWKDLTYQV…GLIDYFEKHG (244 aa)) folds into the ABC transporter 2 domain. Residue 903–910 (GASGAGKT) participates in ATP binding. The chain crosses the membrane as a helical span at residues 1204-1224 (YIYSKFFLVITASLFNGFAFF). The Extracellular segment spans residues 1225 to 1239 (HSGTSQQGLQNQMFS). Residues 1240 to 1260 (MFMFYMPLQTLIQQMLPYYVM) form a helical membrane-spanning segment. The Cytoplasmic segment spans residues 1261 to 1288 (QREIYEVREAPSRTFSWFAFIASQITTE). Residues 1289–1309 (IPFQVVLGTVAFFCWYYPVGL) form a helical membrane-spanning segment. Topologically, residues 1310–1326 (YQNATPTDTVHERGALM) are extracellular. The chain crosses the membrane as a helical span at residues 1327-1347 (WLLVTAFYVYTISLGQMVVAF). Topologically, residues 1348-1362 (MEIADNAANMVNLMF) are cytoplasmic. A helical membrane pass occupies residues 1363–1383 (IMCLNFCGVLATPEALPGFWI). Residues 1384-1475 (FMYRCNPFTY…HAVYSERWRN (92 aa)) lie on the Extracellular side of the membrane. The helical transmembrane segment at 1476–1496 (FGIFIAFIAINMIGTIFFYWL) threads the bilayer. At 1497 to 1508 (ARVPKSSKSKNH) the chain is on the cytoplasmic side.

Belongs to the ABC transporter superfamily.

It is found in the cell membrane. The catalysed reaction is fluconazole(in) + ATP + H2O = fluconazole(out) + ADP + phosphate + H(+). It catalyses the reaction itraconazole(in) + ATP + H2O = itraconazole(out) + ADP + phosphate + H(+). It carries out the reaction voriconazole(in) + ATP + H2O = voriconazole(out) + ADP + phosphate + H(+). The bis-benzodioxolylindolinone azoffluxin acts as an inhibitor of the transporter activity. Clorgyline analogs M19 and M25 inhibit the transcporter activity by uncoupling CDR1 ATPase activity from the active transport of substrates. Activity is also inhibited by beauvericin and oligomycin. Pleiotropic ABC efflux transporter that confers resistance to numerous chemicals including itraconazole, fluconazole, voriconazole and posaconazole. This chain is Pleiotropic ABC efflux transporter of multiple drugs CDR1, found in Candidozyma auris (Yeast).